Reading from the N-terminus, the 512-residue chain is Allene oxide synthase 1, chloroplastic (512 aa).

The transit peptide at 1 to 25 (MATAAACISFASPSPARVVIRRQTR) directs the protein to the chloroplast. The tract at residues 23–43 (QTRASASASATDRQEVVSPKR) is disordered. Heme b contacts are provided by K127, H158, and K162. N315 provides a ligand contact to (13S)-hydroperoxy-(9Z,11E,15Z)-octadecatrienoate. Heme b-binding residues include K463 and C465.

This sequence belongs to the cytochrome P450 family. It depends on heme b as a cofactor. Expressed in coleoptiles, and at lower level in leaves of dark-grown seedlings.

The protein localises to the plastid. Its subcellular location is the chloroplast membrane. It catalyses the reaction (13S)-hydroperoxy-(9Z,11E,15Z)-octadecatrienoate = (9Z,13S,15Z)-12,13-epoxyoctadeca-9,11,15-trienoate + H2O. It functions in the pathway lipid metabolism; oxylipin biosynthesis. Its function is as follows. Involved in the biosynthesis of jasmonic acid, a growth regulator that is implicated also as a signaling molecule in plant defense. Converts 13-hydroperoxylinolenic acid to 12,13-epoxylinolenic acid. This is Allene oxide synthase 1, chloroplastic (CYP74A1) from Oryza sativa subsp. japonica (Rice).